The primary structure comprises 233 residues: NAD(P)H-hydrate epimerase (233 aa).

The 204-residue stretch at 15-218 (SQQFDVELMS…KLQEKYNFIV (204 aa)) folds into the YjeF N-terminal domain. 67 to 71 (NNGGD) is a binding site for (6S)-NADPHX. Positions 68 and 128 each coordinate K(+). (6S)-NADPHX-binding positions include 132–138 (GFSFKPP), Y143, and D161. S164 contributes to the K(+) binding site.

Belongs to the NnrE/AIBP family. K(+) serves as cofactor.

The enzyme catalyses (6R)-NADHX = (6S)-NADHX. It catalyses the reaction (6R)-NADPHX = (6S)-NADPHX. Functionally, catalyzes the epimerization of the S- and R-forms of NAD(P)HX, a damaged form of NAD(P)H that is a result of enzymatic or heat-dependent hydration. This is a prerequisite for the S-specific NAD(P)H-hydrate dehydratase to allow the repair of both epimers of NAD(P)HX. The polypeptide is NAD(P)H-hydrate epimerase (Paramecium tetraurelia).